Here is a 260-residue protein sequence, read N- to C-terminus: Proteasome subunit alpha type-1 (260 aa).

Residues 240–260 are disordered; it reads PRTTGGAAAAAAPGGAEPMQM. The span at 244-260 shows a compositional bias: low complexity; sequence GGAAAAAAPGGAEPMQM.

Belongs to the peptidase T1A family. As to quaternary structure, the 26S proteasome consists of a 20S proteasome core and two 19S regulatory subunits. The 20S proteasome core is composed of 28 subunits that are arranged in four stacked rings, resulting in a barrel-shaped structure. The two end rings are each formed by seven alpha subunits, and the two central rings are each formed by seven beta subunits. The catalytic chamber with the active sites is on the inside of the barrel.

It is found in the cytoplasm. The protein resides in the nucleus. In terms of biological role, the proteasome is a multicatalytic proteinase complex which is characterized by its ability to cleave peptides with Arg, Phe, Tyr, Leu, and Glu adjacent to the leaving group at neutral or slightly basic pH. The proteasome has an ATP-dependent proteolytic activity. The protein is Proteasome subunit alpha type-1 (pas-6) of Caenorhabditis elegans.